Here is a 219-residue protein sequence, read N- to C-terminus: Steroid receptor RNA activator 1 (219 aa).

2 disordered regions span residues 1-90 (MAEL…SSPV) and 192-219 (SLSSEENKEEKSTVAPENQTIPGFQPSS). The segment covering 23-32 (YGLQTQTGGT) has biased composition (polar residues). Ser48 bears the Phosphoserine mark. The span at 55 to 76 (SGPPPVDHPPPSSKASRPPPMG) shows a compositional bias: pro residues. Basic and acidic residues predominate over residues 192–203 (SLSSEENKEEKS). The span at 206 to 219 (APENQTIPGFQPSS) shows a compositional bias: polar residues.

This sequence belongs to the SRA1 family. In terms of assembly, SRA1 RNA exists in a ribonucleoprotein complex containing NCOA1. The RNA also forms a complex with PUS1 and RARG in the nucleus. Interacts with AR. As to expression, expressed in various prostate cancer cell lines.

It localises to the nucleus. The protein resides in the cytoplasm. In terms of biological role, functional RNA which acts as a transcriptional coactivator that selectively enhances steroid receptor-mediated transactivation ligand-independently through a mechanism involving the modulating N-terminal domain (AF-1) of steroid receptors. Also mediates transcriptional coactivation of steroid receptors ligand-dependently through the steroid-binding domain (AF-2). Enhances cellular proliferation and differentiation and promotes apoptosis in vivo. May play a role in tumorigenesis. The sequence is that of Steroid receptor RNA activator 1 from Rattus norvegicus (Rat).